The chain runs to 135 residues: Salivary protein 15 Iper-1 (135 aa).

The N-terminal stretch at 1–22 (MESFVAMKVVCILFLFVVAAEA) is a signal peptide. 2 N-linked (GlcNAc...) asparagine glycosylation sites follow: Asn-93 and Asn-104. The segment at 116–135 (GPNKQTCADKSKCVGHIPGC) is CD4-binding.

Belongs to the salp15 family. In terms of assembly, interacts with host CD4. Interacts with host DC-SIGN (CD209). As to quaternary structure, (Microbial infection) Interacts with Borrelia outer surface protein C (OspC). Expressed in salivary glands from feeding female ticks. Highly expressed 4 days after start of feeding.

It is found in the secreted. In terms of biological role, salivary tick protein that downregulates host immune system by binding to both dendritic cells, and CD4(+) T cells. Specifically binds to the CD4 coreceptor on T cells. This interaction prevents the activation of the Src kinase, Lck, and its downstream substrate Zap-70, and results in deficient activation of PLCgamma1, the repression of calcium fluxes triggered by T-cell antigen receptor (TCR) ligation, and a subsequent reduction in interleukin-2 production. This salivary protein also binds to DC-SIGN (CD209) on dendritic cells (DC) and activates the Raf-1 kinase/MEK signaling pathway that results in down-regulating expression of pro-inflammatory cytokines. Furthermore, it inhibits T cell proliferation induced by DCs. It also inhibits in vitro keratinocyte inflammation induced by Borrelia burgdorferi or by the major outer surface protein (OspC) of Borrelia. In addition, it downregulates chemokines and monocyte chemoattractant protein 1, as well as several antimicrobial peptides such as defensins, cathelicidin, psoriasin, and RNase 7. Apart from its immunomodulatory activities, it is also associated with protection of Borrelia spirochetes from antibody-mediated killing through its binding to OspC. In vivo, tests on different immune disease animal models show promising therapeutic results, e.g., in inhibiting HIV infection, experimental autoimmune encephalomyelitis, transplantation rejection, and asthma. Its function is as follows. (Microbial infection) Protects Borrelia garinii from anti-Borrelia antibody-mediated cytotoxicity in vitro. May facilitate B.garinii transmission in mouse model. Functionally, (Microbial infection) Protects Borrelia burgdorferi from anti-Borrelia antibody-mediated cytotoxicity in vitro. (Microbial infection) Protects Borrelia afzelii from anti-Borrelia antibody-mediated cytotoxicity in vitro. This Ixodes persulcatus (Taiga tick) protein is Salivary protein 15 Iper-1.